The following is a 158-amino-acid chain: Regulator of sigma D (158 aa).

It belongs to the Rsd/AlgQ family. Interacts with RpoD.

The protein resides in the cytoplasm. Its function is as follows. Binds RpoD and negatively regulates RpoD-mediated transcription activation by preventing the interaction between the primary sigma factor RpoD with the catalytic core of the RNA polymerase and with promoter DNA. May be involved in replacement of the RNA polymerase sigma subunit from RpoD to RpoS during the transition from exponential growth to the stationary phase. This is Regulator of sigma D from Escherichia coli O6:H1 (strain CFT073 / ATCC 700928 / UPEC).